We begin with the raw amino-acid sequence, 107 residues long: Phosphoribosyl-ATP pyrophosphatase (107 aa).

The protein belongs to the PRA-PH family.

The protein resides in the cytoplasm. The enzyme catalyses 1-(5-phospho-beta-D-ribosyl)-ATP + H2O = 1-(5-phospho-beta-D-ribosyl)-5'-AMP + diphosphate + H(+). It participates in amino-acid biosynthesis; L-histidine biosynthesis; L-histidine from 5-phospho-alpha-D-ribose 1-diphosphate: step 2/9. The sequence is that of Phosphoribosyl-ATP pyrophosphatase from Azoarcus sp. (strain BH72).